A 224-amino-acid chain; its full sequence is Glycerol-3-phosphate acyltransferase (224 aa).

Helical transmembrane passes span 4–24 (FVIVLINLAFCLGAYLFGSIN), 60–80 (LVIFALDILKTYLASLLVYFV), 88–108 (SVVVFHAVAYCVVIGHIFPIW), 124–144 (IISVNIIIAVIGAIVYLLIII), 149–169 (IVSFTTLITIPSLLPLMFIPW), and 182–202 (WPWWISPLVYVLIILLVIWSH).

It belongs to the PlsY family. Probably interacts with PlsX.

Its subcellular location is the cell membrane. It carries out the reaction an acyl phosphate + sn-glycerol 3-phosphate = a 1-acyl-sn-glycero-3-phosphate + phosphate. It functions in the pathway lipid metabolism; phospholipid metabolism. Its function is as follows. Catalyzes the transfer of an acyl group from acyl-phosphate (acyl-PO(4)) to glycerol-3-phosphate (G3P) to form lysophosphatidic acid (LPA). This enzyme utilizes acyl-phosphate as fatty acyl donor, but not acyl-CoA or acyl-ACP. This chain is Glycerol-3-phosphate acyltransferase, found in Mycoplasmopsis pulmonis (strain UAB CTIP) (Mycoplasma pulmonis).